A 150-amino-acid polypeptide reads, in one-letter code: D-aminoacyl-tRNA deacylase (150 aa).

A Gly-cisPro motif, important for rejection of L-amino acids motif is present at residues 138–139 (GP).

Belongs to the DTD family. Homodimer.

The protein localises to the cytoplasm. The catalysed reaction is glycyl-tRNA(Ala) + H2O = tRNA(Ala) + glycine + H(+). The enzyme catalyses a D-aminoacyl-tRNA + H2O = a tRNA + a D-alpha-amino acid + H(+). Functionally, an aminoacyl-tRNA editing enzyme that deacylates mischarged D-aminoacyl-tRNAs. Also deacylates mischarged glycyl-tRNA(Ala), protecting cells against glycine mischarging by AlaRS. Acts via tRNA-based rather than protein-based catalysis; rejects L-amino acids rather than detecting D-amino acids in the active site. By recycling D-aminoacyl-tRNA to D-amino acids and free tRNA molecules, this enzyme counteracts the toxicity associated with the formation of D-aminoacyl-tRNA entities in vivo and helps enforce protein L-homochirality. This chain is D-aminoacyl-tRNA deacylase, found in Chromobacterium violaceum (strain ATCC 12472 / DSM 30191 / JCM 1249 / CCUG 213 / NBRC 12614 / NCIMB 9131 / NCTC 9757 / MK).